The chain runs to 516 residues: Probable cytochrome P450 9f2 (516 aa).

Cys-460 contacts heme.

This sequence belongs to the cytochrome P450 family. The cofactor is heme.

The protein resides in the endoplasmic reticulum membrane. Its subcellular location is the microsome membrane. May be involved in the metabolism of insect hormones and in the breakdown of synthetic insecticides. This chain is Probable cytochrome P450 9f2 (Cyp9f2), found in Drosophila melanogaster (Fruit fly).